A 257-amino-acid polypeptide reads, in one-letter code: Imidazole glycerol phosphate synthase subunit HisF (257 aa).

Residues D11 and D130 contribute to the active site.

The protein belongs to the HisA/HisF family. As to quaternary structure, heterodimer of HisH and HisF.

The protein resides in the cytoplasm. It catalyses the reaction 5-[(5-phospho-1-deoxy-D-ribulos-1-ylimino)methylamino]-1-(5-phospho-beta-D-ribosyl)imidazole-4-carboxamide + L-glutamine = D-erythro-1-(imidazol-4-yl)glycerol 3-phosphate + 5-amino-1-(5-phospho-beta-D-ribosyl)imidazole-4-carboxamide + L-glutamate + H(+). The protein operates within amino-acid biosynthesis; L-histidine biosynthesis; L-histidine from 5-phospho-alpha-D-ribose 1-diphosphate: step 5/9. Its function is as follows. IGPS catalyzes the conversion of PRFAR and glutamine to IGP, AICAR and glutamate. The HisF subunit catalyzes the cyclization activity that produces IGP and AICAR from PRFAR using the ammonia provided by the HisH subunit. The polypeptide is Imidazole glycerol phosphate synthase subunit HisF (Actinobacillus succinogenes (strain ATCC 55618 / DSM 22257 / CCUG 43843 / 130Z)).